Consider the following 76-residue polypeptide: Protein CYSTEINE-RICH TRANSMEMBRANE MODULE 11 (76 aa).

The tract at residues Gly-19–Arg-45 is disordered. A helical membrane pass occupies residues Val-47 to Val-63.

It belongs to the CYSTM1 family. In terms of assembly, heterodimers. Interacts with CYSTM6, CYSTM7 and WIH1/CYSTM13. As to expression, mostly expressed in stems, siliques, leaves and flowers and, to a lower extent, in roots.

Its subcellular location is the cell membrane. It localises to the cytoplasm. Involved in resistance to abiotic stress. The chain is Protein CYSTEINE-RICH TRANSMEMBRANE MODULE 11 from Arabidopsis thaliana (Mouse-ear cress).